Reading from the N-terminus, the 372-residue chain is Cytochrome b (372 aa).

The next 4 helical transmembrane spans lie at phenylalanine 25 to isoleucine 45, tryptophan 69 to isoleucine 90, tryptophan 105 to leucine 125, and phenylalanine 170 to isoleucine 190. 2 residues coordinate heme b: histidine 75 and histidine 89. Heme b contacts are provided by histidine 174 and histidine 188. Residue histidine 193 participates in a ubiquinone binding. Transmembrane regions (helical) follow at residues tyrosine 218–leucine 238, leucine 280–histidine 300, leucine 312–threonine 332, and phenylalanine 339–proline 358.

This sequence belongs to the cytochrome b family. As to quaternary structure, the cytochrome bc1 complex contains 3 respiratory subunits (MT-CYB, CYC1 and UQCRFS1), 2 core proteins (UQCRC1 and UQCRC2) and probably 6 low-molecular weight proteins. Heme b is required as a cofactor.

Its subcellular location is the mitochondrion inner membrane. Its function is as follows. Component of the ubiquinol-cytochrome c reductase complex (complex III or cytochrome b-c1 complex) that is part of the mitochondrial respiratory chain. The b-c1 complex mediates electron transfer from ubiquinol to cytochrome c. Contributes to the generation of a proton gradient across the mitochondrial membrane that is then used for ATP synthesis. The sequence is that of Cytochrome b (MT-CYB) from Aspidelaps scutatus (Shield-nose snake).